The primary structure comprises 118 residues: Basic phospholipase A2 nigroxin A (118 aa).

7 cysteine pairs are disulfide-bonded: cysteine 11/cysteine 70, cysteine 25/cysteine 117, cysteine 27/cysteine 43, cysteine 42/cysteine 98, cysteine 49/cysteine 91, cysteine 59/cysteine 84, and cysteine 77/cysteine 89. Residues tyrosine 26, glycine 28, and glycine 30 each coordinate Ca(2+). Histidine 46 is a catalytic residue. Aspartate 47 is a binding site for Ca(2+). The active site involves aspartate 92.

This sequence belongs to the phospholipase A2 family. Group I subfamily. D49 sub-subfamily. Requires Ca(2+) as cofactor. As to expression, expressed by the venom gland.

It localises to the secreted. The enzyme catalyses a 1,2-diacyl-sn-glycero-3-phosphocholine + H2O = a 1-acyl-sn-glycero-3-phosphocholine + a fatty acid + H(+). Snake venom phospholipase A2 (PLA2) that has only a weak enzymatic activity. It has a myotoxic activity in vivo (dystrophic effect). PLA2 catalyzes the calcium-dependent hydrolysis of the 2-acyl groups in 3-sn-phosphoglycerides. The polypeptide is Basic phospholipase A2 nigroxin A (Micrurus nigrocinctus (Central American coral snake)).